The following is a 348-amino-acid chain: Phospho-2-dehydro-3-deoxyheptonate aldolase, Trp-sensitive (348 aa).

The protein belongs to the class-I DAHP synthase family.

The enzyme catalyses D-erythrose 4-phosphate + phosphoenolpyruvate + H2O = 7-phospho-2-dehydro-3-deoxy-D-arabino-heptonate + phosphate. Its pathway is metabolic intermediate biosynthesis; chorismate biosynthesis; chorismate from D-erythrose 4-phosphate and phosphoenolpyruvate: step 1/7. Functionally, stereospecific condensation of phosphoenolpyruvate (PEP) and D-erythrose-4-phosphate (E4P) giving rise to 3-deoxy-D-arabino-heptulosonate-7-phosphate (DAHP). The polypeptide is Phospho-2-dehydro-3-deoxyheptonate aldolase, Trp-sensitive (aroH) (Buchnera aphidicola subsp. Baizongia pistaciae (strain Bp)).